Here is a 59-residue protein sequence, read N- to C-terminus: Large ribosomal subunit protein bL32 (59 aa).

A disordered region spans residues 1 to 59; that stretch reads MAVQQNKKSPSKRGMHRAHDFLTAPVIAIEPSTGEAHRRHHISPNGFYRGRKVVKGKDE. Basic residues predominate over residues 49-59; it reads RGRKVVKGKDE.

This sequence belongs to the bacterial ribosomal protein bL32 family.

The chain is Large ribosomal subunit protein bL32 from Laribacter hongkongensis (strain HLHK9).